The chain runs to 596 residues: Histone deacetylase 9 (596 aa).

Basic and acidic residues-rich tracts occupy residues 132 to 153 and 160 to 172; these read REKEQKMEQQRKEQEAERHRQE and RSKDRVKERAVAS. Disordered regions lie at residues 132–172, 214–258, 293–313, and 522–596; these read REKE…AVAS, HTSL…VRSR, SSVSSSSPVSGPSSPNNGPVA, and QPEG…QQVT. The segment at 172–222 is interaction with mef2; that stretch reads STEVKQKLQEFILSKSATKEPLTNGTSHSMGRHPKLWYTAAHHTSLDQSSP. The segment covering 221–237 has biased composition (pro residues); sequence SPPPSGTSPTYKCPPPG. A compositionally biased stretch (low complexity) spans 293–312; it reads SSVSSSSPVSGPSSPNNGPV. Positions 522 to 536 are enriched in basic and acidic residues; that stretch reads QPEGHLEEAEEDLHG. Residues 541–558 show a composition bias toward polar residues; sequence QEKSSSIDNTRSYSSTDL. Residues 567–585 show a composition bias toward basic and acidic residues; it reads KVKEEPPDSENEIKTHLQS. Polar residues predominate over residues 586–596; the sequence is EQKSVFAQQVT.

It belongs to the histone deacetylase family. HD type 2 subfamily. Homodimer. Interacts with mef2. As to expression, broadly expressed.

It localises to the nucleus. It catalyses the reaction N(6)-acetyl-L-lysyl-[histone] + H2O = L-lysyl-[histone] + acetate. Its function is as follows. Devoided of intrinsic deacetylase activity, promotes the deacetylation of lysine residues on the N-terminal part of the core histones (H2A, H2B, H3 and H4) by recruiting other histone deacetylases. Histone deacetylation gives a tag for epigenetic repression and plays an important role in transcriptional regulation, cell cycle progression and developmental events. Represses MEF2-dependent transcription. This chain is Histone deacetylase 9 (hdac9), found in Xenopus laevis (African clawed frog).